Here is a 639-residue protein sequence, read N- to C-terminus: 2-oxoacid:ferredoxin oxidoreductase 1, subunit alpha (639 aa).

The YPITP motif motif lies at 266–270; the sequence is YPITP. 2 residues coordinate substrate: Thr-269 and Arg-352.

As to quaternary structure, heterodimer composed of an alpha and a beta subunit.

It carries out the reaction a 2-oxocarboxylate + 2 oxidized [2Fe-2S]-[ferredoxin] + CoA = an acyl-CoA + 2 reduced [2Fe-2S]-[ferredoxin] + CO2 + H(+). Its function is as follows. Catalyzes the coenzyme A-dependent oxidative decarboxylation of different 2-oxoacids such as pyruvate, 2-oxobutyrate and glyoxylate to form their CoA derivatives. In Aeropyrum pernix (strain ATCC 700893 / DSM 11879 / JCM 9820 / NBRC 100138 / K1), this protein is 2-oxoacid:ferredoxin oxidoreductase 1, subunit alpha.